The sequence spans 477 residues: Bifunctional protein HldE (477 aa).

The interval Met-1–Ala-319 is ribokinase. Residue Asn-195 to Glu-198 coordinates ATP. Residue Asp-264 is part of the active site. Residues Met-346 to Gly-477 form a cytidylyltransferase region.

It in the N-terminal section; belongs to the carbohydrate kinase PfkB family. In the C-terminal section; belongs to the cytidylyltransferase family. As to quaternary structure, homodimer.

It catalyses the reaction D-glycero-beta-D-manno-heptose 7-phosphate + ATP = D-glycero-beta-D-manno-heptose 1,7-bisphosphate + ADP + H(+). It carries out the reaction D-glycero-beta-D-manno-heptose 1-phosphate + ATP + H(+) = ADP-D-glycero-beta-D-manno-heptose + diphosphate. The protein operates within nucleotide-sugar biosynthesis; ADP-L-glycero-beta-D-manno-heptose biosynthesis; ADP-L-glycero-beta-D-manno-heptose from D-glycero-beta-D-manno-heptose 7-phosphate: step 1/4. Its pathway is nucleotide-sugar biosynthesis; ADP-L-glycero-beta-D-manno-heptose biosynthesis; ADP-L-glycero-beta-D-manno-heptose from D-glycero-beta-D-manno-heptose 7-phosphate: step 3/4. Catalyzes the phosphorylation of D-glycero-D-manno-heptose 7-phosphate at the C-1 position to selectively form D-glycero-beta-D-manno-heptose-1,7-bisphosphate. Its function is as follows. Catalyzes the ADP transfer from ATP to D-glycero-beta-D-manno-heptose 1-phosphate, yielding ADP-D-glycero-beta-D-manno-heptose. This chain is Bifunctional protein HldE, found in Halorhodospira halophila (strain DSM 244 / SL1) (Ectothiorhodospira halophila (strain DSM 244 / SL1)).